The primary structure comprises 532 residues: MTQLYTYIRLLGACLFIISHVQGQNLDSMLHGTGMKSDVDQKKPENGVTLAPEDTLPFLKCYCSGHCPDDAINNTCITNGHCFAIIEEDDQGETTLTSGCMKYEGSDFQCKDSPKAQLRRTIECCRTNLCNQYLQPTLPPVVIGPFFDGSVRWLAVLISMAVCIVAMIVFSSCFCYKHYCKSISSRGRYNRDLEQDEAFIPVGESLKDLIDQSQSSGSGSGLPLLVQRTIAKQIQMVRQVGKGRYGEVWMGKWRGEKVAVKVFFTTEEASWFRETEIYQTVLMRHENILGFIAADIKGTGSWTQLYLITDYHENGSLYDFLKCATLDTRALLKLAYSAACGLCHLHTEIYGTQGKPAIAHRDLKSKNILIKKNGSCCIADLGLAVKFNSDTNEVDIPLNTRVGTRRYMAPEVLDESLSKNHFQPYIMADIYSFGLIIWEMARRCITGGIVEEYQLPYYNMVPSDPSYEDMREVVCVKRLRPIVSNRWNSDECLRAVLKLMSECWAHNPASRLTALRIKKTLAKMVESQDVKI.

An N-terminal signal peptide occupies residues 1-23 (MTQLYTYIRLLGACLFIISHVQG). Residues 24–152 (QNLDSMLHGT…IGPFFDGSVR (129 aa)) lie on the Extracellular side of the membrane. Intrachain disulfides connect Cys61/Cys82, Cys63/Cys67, and Cys76/Cys100. N-linked (GlcNAc...) asparagine glycosylation occurs at Asn73. The interval 107 to 109 (DFQ) is mediates specificity for BMP ligand. 2 disulfide bridges follow: Cys110/Cys124 and Cys125/Cys130. Residues 153–176 (WLAVLISMAVCIVAMIVFSSCFCY) form a helical membrane-spanning segment. Residues 177–532 (KHYCKSISSR…KMVESQDVKI (356 aa)) are Cytoplasmic-facing. The region spanning 204 to 233 (ESLKDLIDQSQSSGSGSGLPLLVQRTIAKQ) is the GS domain. In terms of domain architecture, Protein kinase spans 234-525 (IQMVRQVGKG…RIKKTLAKMV (292 aa)). ATP-binding positions include 240-248 (VGKGRYGEV) and Lys261. Asp362 functions as the Proton acceptor in the catalytic mechanism.

This sequence belongs to the protein kinase superfamily. TKL Ser/Thr protein kinase family. TGFB receptor subfamily. In terms of assembly, interacts with low affinity with GDF5; positively regulates chondrocyte differentiation. Interacts with BMP4. Interacts with SCUBE3. Interacts with TSC22D1/TSC-22. Interacts with BMP2; the interaction may induce HAMP expression. Interacts with BMP6. Interacts with heterodimers composed of BMP2 and BMP6 in vitro; the interaction may induce HAMP expression. Mg(2+) is required as a cofactor. Mn(2+) serves as cofactor. Post-translationally, glycosylated.

It is found in the cell membrane. Its subcellular location is the cell surface. It catalyses the reaction L-threonyl-[receptor-protein] + ATP = O-phospho-L-threonyl-[receptor-protein] + ADP + H(+). It carries out the reaction L-seryl-[receptor-protein] + ATP = O-phospho-L-seryl-[receptor-protein] + ADP + H(+). On ligand binding, forms a receptor complex consisting of two type II and two type I transmembrane serine/threonine kinases. Type II receptors phosphorylate and activate type I receptors which autophosphorylate, then bind and activate SMAD transcriptional regulators. Receptor for BMP2, BMP4, GDF5 and GDF6. Positively regulates chondrocyte differentiation through GDF5 interaction. Mediates induction of adipogenesis by GDF6. May promote the expression of HAMP, potentially via its interaction with BMP2. In Rattus norvegicus (Rat), this protein is Bone morphogenetic protein receptor type-1A (Bmpr1a).